The chain runs to 149 residues: SsrA-binding protein (149 aa).

Belongs to the SmpB family.

It is found in the cytoplasm. In terms of biological role, required for rescue of stalled ribosomes mediated by trans-translation. Binds to transfer-messenger RNA (tmRNA), required for stable association of tmRNA with ribosomes. tmRNA and SmpB together mimic tRNA shape, replacing the anticodon stem-loop with SmpB. tmRNA is encoded by the ssrA gene; the 2 termini fold to resemble tRNA(Ala) and it encodes a 'tag peptide', a short internal open reading frame. During trans-translation Ala-aminoacylated tmRNA acts like a tRNA, entering the A-site of stalled ribosomes, displacing the stalled mRNA. The ribosome then switches to translate the ORF on the tmRNA; the nascent peptide is terminated with the 'tag peptide' encoded by the tmRNA and targeted for degradation. The ribosome is freed to recommence translation, which seems to be the essential function of trans-translation. This chain is SsrA-binding protein, found in Wolbachia pipientis wMel.